The following is a 294-amino-acid chain: N-acetylmuramic acid 6-phosphate etherase (294 aa).

The 164-residue stretch at Val54–Lys217 folds into the SIS domain. The active-site Proton donor is Glu82. Glu113 is a catalytic residue.

The protein belongs to the GCKR-like family. MurNAc-6-P etherase subfamily. Homodimer.

The catalysed reaction is N-acetyl-D-muramate 6-phosphate + H2O = N-acetyl-D-glucosamine 6-phosphate + (R)-lactate. Its pathway is amino-sugar metabolism; N-acetylmuramate degradation. Its function is as follows. Specifically catalyzes the cleavage of the D-lactyl ether substituent of MurNAc 6-phosphate, producing GlcNAc 6-phosphate and D-lactate. The protein is N-acetylmuramic acid 6-phosphate etherase of Bacillus cereus (strain ZK / E33L).